We begin with the raw amino-acid sequence, 55 residues long: Large ribosomal subunit protein bL33 (55 aa).

It belongs to the bacterial ribosomal protein bL33 family.

The polypeptide is Large ribosomal subunit protein bL33 (Yersinia pestis (strain Pestoides F)).